The chain runs to 289 residues: Diaminopimelate epimerase (289 aa).

Asparagine 13, glutamine 47, and asparagine 67 together coordinate substrate. The active-site Proton donor is the cysteine 76. Residues 77–78 (GN), asparagine 167, asparagine 200, and 218–219 (ER) each bind substrate. Cysteine 227 (proton acceptor) is an active-site residue. Residue 228 to 229 (GT) participates in substrate binding.

This sequence belongs to the diaminopimelate epimerase family. Homodimer.

The protein resides in the cytoplasm. The catalysed reaction is (2S,6S)-2,6-diaminopimelate = meso-2,6-diaminopimelate. It participates in amino-acid biosynthesis; L-lysine biosynthesis via DAP pathway; DL-2,6-diaminopimelate from LL-2,6-diaminopimelate: step 1/1. Its function is as follows. Catalyzes the stereoinversion of LL-2,6-diaminopimelate (L,L-DAP) to meso-diaminopimelate (meso-DAP), a precursor of L-lysine and an essential component of the bacterial peptidoglycan. This Burkholderia ambifaria (strain ATCC BAA-244 / DSM 16087 / CCUG 44356 / LMG 19182 / AMMD) (Burkholderia cepacia (strain AMMD)) protein is Diaminopimelate epimerase.